The following is a 194-amino-acid chain: MKKKYKIDTNIFSKELLGFWLYLMSDCIIFCTLFSVYFILVDNVAQGPSGHNIFQNNLIIIETFLLLFSSFSCNLVLFEMKNKNLYMVFLWLGITFLLGLLFVFLELFEFFHLINLGFGPTRSGFLSSFFVLIATHGIHVISGLIWIIVMIKYVYTFNITNLIYYRMLCLNLFWHFLDIVWVFIFSFVYLFGMV.

Residues 1–18 lie on the Cytoplasmic side of the membrane; sequence MKKKYKIDTNIFSKELLG. The chain crosses the membrane as a helical span at residues 19-41; sequence FWLYLMSDCIIFCTLFSVYFILV. The Extracellular segment spans residues 42 to 55; it reads DNVAQGPSGHNIFQ. The chain crosses the membrane as a helical span at residues 56–78; it reads NNLIIIETFLLLFSSFSCNLVLF. At 79 to 84 the chain is on the cytoplasmic side; sequence EMKNKN. Residues 85–107 form a helical membrane-spanning segment; that stretch reads LYMVFLWLGITFLLGLLFVFLEL. The Extracellular portion of the chain corresponds to 108–126; sequence FEFFHLINLGFGPTRSGFL. A helical transmembrane segment spans residues 127 to 149; sequence SSFFVLIATHGIHVISGLIWIIV. Residues 150-169 are Cytoplasmic-facing; it reads MIKYVYTFNITNLIYYRMLC. A helical membrane pass occupies residues 170-192; the sequence is LNLFWHFLDIVWVFIFSFVYLFG. Topologically, residues 193 to 194 are extracellular; sequence MV.

Belongs to the cytochrome c oxidase subunit 3 family. As to quaternary structure, heterooctamer of two A chains, two B chains, two C chains and two D chains.

The protein resides in the cell membrane. Its function is as follows. Cytochrome bo(3) ubiquinol terminal oxidase is the component of the aerobic respiratory chain of E.coli that predominates when cells are grown at high aeration. Has proton pump activity across the membrane in addition to electron transfer, pumping 2 protons/electron. The chain is Cytochrome bo(3) ubiquinol oxidase subunit 3 (cyoC) from Buchnera aphidicola subsp. Baizongia pistaciae (strain Bp).